A 104-amino-acid polypeptide reads, in one-letter code: Small ubiquitin-related modifier 3 (104 aa).

Glycyl lysine isopeptide (Lys-Gly) (interchain with G-Cter in SUMO2) cross-links involve residues lysine 5 and lysine 7. Lysine 11 participates in a covalent cross-link: Glycyl lysine isopeptide (Lys-Gly) (interchain with G-Cter in SUMO); alternate. Residue lysine 11 forms a Glycyl lysine isopeptide (Lys-Gly) (interchain with G-Cter in SUMO2); alternate linkage. A Ubiquitin-like domain is found at 15 to 92; the sequence is DHINLKVAGQ…IDVFQQQTGG (78 aa). Glycine 92 is covalently cross-linked (Glycyl lysine isopeptide (Gly-Lys) (interchain with K-? in acceptor proteins)). Positions 93 to 104 are excised as a propeptide; it reads SRVASCLLGSGL.

The protein belongs to the ubiquitin family. SUMO subfamily. As to quaternary structure, interacts with SAE2 and UBE2I. Covalently attached to a number of proteins. Interacts with USP25 (via ts SIM domain); the interaction sumoylates USP25 and inhibits its ubiquitin hydrolyzing activity. Interacts with BMAL1. Polymeric chains can be formed through Lys-11 cross-linking. Post-translationally, cleavage of precursor form by SENP1, SENP2 or SENP5 is necessary for function.

The protein resides in the cytoplasm. It is found in the nucleus. Its subcellular location is the PML body. Ubiquitin-like protein which can be covalently attached to target lysines either as a monomer or as a lysine-linked polymer. Does not seem to be involved in protein degradation and may function as an antagonist of ubiquitin in the degradation process. Plays a role in a number of cellular processes such as nuclear transport, DNA replication and repair, mitosis and signal transduction. Covalent attachment to its substrates requires prior activation by the E1 complex SAE1-SAE2 and linkage to the E2 enzyme UBE2I, and can be promoted by an E3 ligase such as PIAS1-4, RANBP2 or CBX4. Plays a role in the regulation of sumoylation status of SETX. This is Small ubiquitin-related modifier 3 (SUMO3) from Bos taurus (Bovine).